A 631-amino-acid polypeptide reads, in one-letter code: Chaperone protein HtpG (631 aa).

The tract at residues 1-339 is a; substrate-binding; the sequence is MSAQKETLGF…SNDLPLNVSR (339 aa). The b stretch occupies residues 340-556; that stretch reads EILQESKDID…EHDMSAHLER (217 aa). A c region spans residues 557–631; it reads MLKAAGQKIE…INKLMLELSV (75 aa).

It belongs to the heat shock protein 90 family. As to quaternary structure, homodimer.

It localises to the cytoplasm. In terms of biological role, molecular chaperone. Has ATPase activity. In Chromobacterium violaceum (strain ATCC 12472 / DSM 30191 / JCM 1249 / CCUG 213 / NBRC 12614 / NCIMB 9131 / NCTC 9757 / MK), this protein is Chaperone protein HtpG.